A 187-amino-acid polypeptide reads, in one-letter code: Elongation factor P (187 aa).

Belongs to the elongation factor P family.

It is found in the cytoplasm. It participates in protein biosynthesis; polypeptide chain elongation. Functionally, involved in peptide bond synthesis. Stimulates efficient translation and peptide-bond synthesis on native or reconstituted 70S ribosomes in vitro. Probably functions indirectly by altering the affinity of the ribosome for aminoacyl-tRNA, thus increasing their reactivity as acceptors for peptidyl transferase. This chain is Elongation factor P, found in Synechococcus sp. (strain CC9605).